The primary structure comprises 279 residues: Tryptophan synthase alpha chain (279 aa).

Catalysis depends on proton acceptor residues Glu-50 and Asp-61.

This sequence belongs to the TrpA family. Tetramer of two alpha and two beta chains.

The catalysed reaction is (1S,2R)-1-C-(indol-3-yl)glycerol 3-phosphate + L-serine = D-glyceraldehyde 3-phosphate + L-tryptophan + H2O. It participates in amino-acid biosynthesis; L-tryptophan biosynthesis; L-tryptophan from chorismate: step 5/5. Its function is as follows. The alpha subunit is responsible for the aldol cleavage of indoleglycerol phosphate to indole and glyceraldehyde 3-phosphate. The sequence is that of Tryptophan synthase alpha chain from Rhizobium meliloti (strain 1021) (Ensifer meliloti).